We begin with the raw amino-acid sequence, 895 residues long: WD repeat-containing protein 36 (895 aa).

WD repeat units follow at residues 30–63 (VVRFSALKRRFYVTTCVGKSFHTYDVQKLSLVAV), 72–101 (CCMAADGRLVFAAYGNVFSAFARNKEIVHT), 110–143 (HFLQPFGDHIISVDTDGILIIWHIYSEEEYLQLT), 152–186 (SAILHPSTYLNKILLGSEQGSLQLWNVKSNKLLYT), 193–230 (GVTALQQAPAVDVVAIGLMSGQVIIHNIKFNETLMKFR), 237–272 (TSISFRTDGHPVMAAGSPCGHIGLWDLEDKKLINQM), 277–320 (STAI…RFRM), and 327–361 (TNIRYYGQNGQQILSASQDGTLQSFSTVHEKFNKS). Phosphoserine occurs at positions 382 and 399. WD repeat units follow at residues 389–428 (TKFAAEEARESDWDGIIACHQGKLSCSTWNYQKSTIGAYF), 441–475 (ATAVDITSCGNFAVIGLSSGTVDVYNMQSGIHRGS), 486–522 (VRGVAVDGLNQLTVTTGSEGLLKFWNFKNKILIHSVS), 527–562 (PNIMLLHRDSGILGLALDDFSISVLDIETRKIVREF), 564–605 (GHQG…DCFL), and 607–645 (DSAPLNVSMSPTGDFLATSHVDHLGIYLWSNISLYSVVS).

As to quaternary structure, part of the small subunit (SSU) processome, composed of more than 70 proteins and the RNA chaperone small nucleolar RNA (snoRNA) U3. As to expression, expressed in heart, placenta, liver, skeletal muscle, kidney and pancreas. In ocular tissues, strong expression in iris, sclera, ciliary muscle, ciliary body, retina and optic nerve.

It is found in the nucleus. The protein localises to the nucleolus. Part of the small subunit (SSU) processome, first precursor of the small eukaryotic ribosomal subunit. During the assembly of the SSU processome in the nucleolus, many ribosome biogenesis factors, an RNA chaperone and ribosomal proteins associate with the nascent pre-rRNA and work in concert to generate RNA folding, modifications, rearrangements and cleavage as well as targeted degradation of pre-ribosomal RNA by the RNA exosome. Involved in the nucleolar processing of SSU 18S rRNA. Involved in T-cell activation and highly coregulated with IL2. In Homo sapiens (Human), this protein is WD repeat-containing protein 36.